A 487-amino-acid chain; its full sequence is Dihydrofolate synthase/folylpolyglutamate synthase (487 aa).

44–46 (DPS) serves as a coordination point for 7,8-dihydropteroate. 74 to 77 (GKTS) serves as a coordination point for ATP. Residues Thr-76 and Ser-98 each coordinate Mg(2+). Residue 150 to 153 (SKFE) coordinates 7,8-dihydropteroate. Residue Glu-174 coordinates Mg(2+). 181 to 183 (WDA) serves as a coordination point for 7,8-dihydropteroate. Mg(2+)-binding residues include His-201 and Asp-203. Residues Asn-301, Arg-338, and 351–354 (DAAH) each bind ATP. Residue Asp-384 participates in Mg(2+) binding.

This sequence belongs to the folylpolyglutamate synthase family. As to quaternary structure, monomer. Requires Mg(2+) as cofactor.

It carries out the reaction 7,8-dihydropteroate + L-glutamate + ATP = 7,8-dihydrofolate + ADP + phosphate + H(+). The enzyme catalyses (6S)-5,6,7,8-tetrahydrofolyl-(gamma-L-Glu)(n) + L-glutamate + ATP = (6S)-5,6,7,8-tetrahydrofolyl-(gamma-L-Glu)(n+1) + ADP + phosphate + H(+). It participates in cofactor biosynthesis; tetrahydrofolate biosynthesis; 7,8-dihydrofolate from 2-amino-4-hydroxy-6-hydroxymethyl-7,8-dihydropteridine diphosphate and 4-aminobenzoate: step 2/2. It functions in the pathway cofactor biosynthesis; tetrahydrofolylpolyglutamate biosynthesis. In terms of biological role, catalyzes the addition of a glutamate residue to dihydropteroate (7,8-dihydropteroate or H2Pte) to form dihydrofolate (7,8-dihydrofolate monoglutamate or H2Pte-Glu). Also catalyzes successive additions of L-glutamate to tetrahydrofolate, leading to folylpolyglutamate derivatives. Is involved in the bioactivation of the antituberculous drug para-aminosalicylic acid (PAS). Is able to use hydroxy-dihydropteroate (H2PtePAS) as substrate, which is the product formed by the action of DHPS (FolP1) on PAS, leading to hydroxy-dihydrofolate (H2PtePAS-Glu). This compound inhibits dihydrofolate reductase DHFR (DfrA), the next enzyme in the folate pathway, and thus disrupts the folate-dependent metabolic pathways. The chain is Dihydrofolate synthase/folylpolyglutamate synthase from Mycobacterium tuberculosis (strain ATCC 25618 / H37Rv).